Consider the following 327-residue polypeptide: Putative HTH-type transcriptional regulatory protein MmarC6_0210 (327 aa).

Residues 128 to 183 (LRETREKLKISVGELAEISRVSRKTIYKYEQNEANPSAEVAIKIEEYLDVPLIKGI) form the HTH cro/C1-type domain. The H-T-H motif DNA-binding region spans 139 to 158 (VGELAEISRVSRKTIYKYEQ).

The polypeptide is Putative HTH-type transcriptional regulatory protein MmarC6_0210 (Methanococcus maripaludis (strain C6 / ATCC BAA-1332)).